Here is a 360-residue protein sequence, read N- to C-terminus: Lipid-A-disaccharide synthase (360 aa).

This sequence belongs to the LpxB family.

The enzyme catalyses a lipid X + a UDP-2-N,3-O-bis[(3R)-3-hydroxyacyl]-alpha-D-glucosamine = a lipid A disaccharide + UDP + H(+). It participates in bacterial outer membrane biogenesis; LPS lipid A biosynthesis. Its function is as follows. Condensation of UDP-2,3-diacylglucosamine and 2,3-diacylglucosamine-1-phosphate to form lipid A disaccharide, a precursor of lipid A, a phosphorylated glycolipid that anchors the lipopolysaccharide to the outer membrane of the cell. The chain is Lipid-A-disaccharide synthase from Helicobacter pylori (strain G27).